The following is a 126-amino-acid chain: MSNIISKEQDEAIKYFRNKLNLSDKDLYIPLINFELLRDKNEQYANILYELYKNDPYLFIRALKEGYVVNQPIAFDEAIVRFFNGEELAIVHKTTGRRYNVNVKMKQLPDGFSLQTMDMWLWSELV.

The sequence is that of SPbeta prophage-derived uncharacterized protein YorC (yorC) from Bacillus subtilis (strain 168).